The following is a 320-amino-acid chain: cUMP-AMP-activated phospholipase (320 aa).

In terms of domain architecture, PNPLA spans leucine 23–isoleucine 204. Residues glycine 27–glycine 32 carry the GXGXXG motif. Positions glycine 59–glycine 63 match the GXSXG motif. Serine 61 (nucleophile) is an active-site residue. Aspartate 191 acts as the Proton acceptor in catalysis. The short motif at aspartate 191–glycine 193 is the DGA/G element.

It belongs to the patatin family.

The enzyme catalyses a 1,2-diacyl-sn-glycero-3-phosphocholine + H2O = a 2-acyl-sn-glycero-3-phosphocholine + a fatty acid + H(+). Phospholipase activity is specifically activated upon 3',3'-cUAMP binding. Is not activated by the other cyclic dinucleotides 3',3'-cGAMP, 3',3'-c-diAMP and 3',3'-c-diGMP. Therefore, is specifically activated by only the nucleotide synthesized from its adjacently encoded nucleotidyltransferase (CdnE). Its function is as follows. Effector phospholipase of a CBASS antivirus system. CBASS (cyclic oligonucleotide-based antiphage signaling system) provides immunity against bacteriophage. The CD-NTase protein synthesizes cyclic nucleotides in response to infection; these serve as specific second messenger signals. The signals activate a diverse range of effectors, leading to bacterial cell death and thus abortive phage infection. A type II-A(UA) CBASS system. Functionally, phospholipase that is activated upon binding to the cyclic dinucleotide (CDN) second messenger 3',3'-cyclic UMP-AMP (3',3'-cUAMP). The chain is cUMP-AMP-activated phospholipase from Escherichia coli.